A 470-amino-acid polypeptide reads, in one-letter code: MENRTPMQHHSGYEIVKSEPPSTPKTLIKSSYMENTPEMVFGSFPIHSGFCTQVVTHTDPMNNNNQPKTNANGRALAADRKRPYPCNLCSSKFGSKMELEEHQNSHTGQKPFECDTCNARFNRRSTLWNHKRIHSDAKPFVCTVCQMTFKWKNSLKCHKDMHQRKNETSAHLDNDLRQLTYATAAKRKLQMEQEENGGLPASSSASSVISHPLITTTSGNKKRSKAAKAKQTPSSLATTLSQVHLGAVQPLHASALVPPSDHQIDLDTTSLDSLMQSQNQNFLMQLYGYSDDGRHNGGMLSLDDTMLSNLSDSKSDSGSSSGGLSIQLPMQTINMLNFRNLGTQQLPPVHQLASSLPSVSSGMDYVNVNQHDSHYIVSQPDMMLGNQPLYHNGSFANIEKSNPHNNQFTIDSCVLLPSSRQDYPFDYTMVNQQYPMQEQVHDQTVGVSVVQQHYAEQAHAHGKTVPHEQW.

Residues 1–25 form a disordered region; sequence MENRTPMQHHSGYEIVKSEPPSTPK. C2H2-type zinc fingers lie at residues 84 to 106, 112 to 134, and 140 to 162; these read YPCN…QNSH, FECD…KRIH, and FVCT…KDMH. Residues 191–235 form a disordered region; that stretch reads MEQEENGGLPASSSASSVISHPLITTTSGNKKRSKAAKAKQTPSS. Positions 221-230 match the Nuclear localization signal motif; it reads KKRSKAAKAK.

This sequence belongs to the krueppel C2H2-type zinc-finger protein family. As to expression, expressed in body wall muscle and gonad (at protein level).

The protein resides in the nucleus. Its subcellular location is the chromosome. In terms of biological role, probable transcription factor; required for proper organization of muscle myofilaments and for their recruitment to the M line. The polypeptide is Zinc finger protein pat-9 (Caenorhabditis elegans).